Here is a 105-residue protein sequence, read N- to C-terminus: Protein SMALL AUXIN UP-REGULATED RNA 16 (105 aa).

It belongs to the ARG7 family. Expressed in etiolated hypocotyls, cotyledons, leaves, flowers and siliques.

It is found in the cell membrane. Its function is as follows. Provide a mechanistic link between auxin and plasma membrane H(+)-ATPases (PM H(+)-ATPases, e.g. AHA1 and AHA2), and triggers PM H(+)-ATPases activity by promoting phosphorylation of their C-terminal autoinhibitory domain as a result of PP2C-D subfamily of type 2C phosphatases inhibition, thus leading to the acidification of the apoplast and the facilitation of solutes and water uptake to drive cell expansion. Triggers plant growth probably by promoting cell elongation. Regulates branch angles and bending. In Arabidopsis thaliana (Mouse-ear cress), this protein is Protein SMALL AUXIN UP-REGULATED RNA 16.